The sequence spans 653 residues: PAN2-PAN3 deadenylation complex subunit PAN3 (653 aa).

Disordered regions lie at residues 1 to 21 (MASD…ENAK) and 45 to 128 (HDPN…AAPD). The C3H1-type zinc finger occupies 19–48 (NAKDTLCRNVTIYGRCRYEDKGCVYNHDPN). The segment covering 68–95 (SFTPSLLSSNGSSPTSSSATLKKTTTIS) has biased composition (low complexity). The segment covering 108–119 (GISSRSNASTPS) has biased composition (polar residues). Residues 256–516 (QTLPNTQLPA…TIDIFITGIS (261 aa)) form a pseudokinase domain region. Residues R308, 357 to 364 (DYHPLSKT), and 416 to 417 (SK) each bind ATP. Residues 517-555 (SQLMSTFDSALHMDDQLTSDLSRELENGRLVRLMTKLNF) adopt a coiled-coil conformation. The tract at residues 556–653 (INERPEYEHD…ALLKPTRRVH (98 aa)) is knob domain.

Belongs to the protein kinase superfamily. PAN3 family. As to quaternary structure, homodimer. Forms a heterotrimer with a catalytic subunit pan2 to form the poly(A)-nuclease (PAN) deadenylation complex. Interacts (via PAM-2 motif) with poly(A)-binding protein pab1 (via PABC domain), conferring substrate specificity of the enzyme complex.

It is found in the cytoplasm. In terms of biological role, regulatory subunit of the poly(A)-nuclease (PAN) deadenylation complex, one of two cytoplasmic mRNA deadenylases involved in mRNA turnover. PAN specifically shortens poly(A) tails of RNA and the activity is stimulated by poly(A)-binding protein pab1. PAN deadenylation is followed by rapid degradation of the shortened mRNA tails by the CCR4-NOT complex. Deadenylated mRNAs are then degraded by two alternative mechanisms, namely exosome-mediated 3'-5' exonucleolytic degradation, or deadenylation-dependent mRNA decaping and subsequent 5'-3' exonucleolytic degradation by xrn1. May also be involved in post-transcriptional maturation of mRNA poly(A) tails. pan3 acts as a positive regulator for PAN activity, recruiting the catalytic subunit pan2 to mRNA via its interaction with RNA and with pab1. The polypeptide is PAN2-PAN3 deadenylation complex subunit PAN3 (Aspergillus terreus (strain NIH 2624 / FGSC A1156)).